A 228-amino-acid polypeptide reads, in one-letter code: MASVAKTGAEALRNAPFRVGKKQIFLPNHVITFVRPLPKQPPNLATFIVPLEFNKLDLRDYLYHVYNVEVTGVRSFVNQRMHEQRHGDVGNWRRPKSQKMMIAELAKPFVWPKPPAEDAREAFDYAMWKKQKTAQEQDTKFQGIRAQGEVVPPSQFEVTKDRKAIKARQSKFLSGEETWAPGKVNAFLNSKIVPEEEGWSEVEENLPLDESAESAAEESSSKGSETRQ.

A disordered region spans residues 194–228 (PEEEGWSEVEENLPLDESAESAAEESSSKGSETRQ). A compositionally biased stretch (acidic residues) spans 195 to 216 (EEEGWSEVEENLPLDESAESAA).

This sequence belongs to the universal ribosomal protein uL23 family. As to quaternary structure, component of the mitochondrial large ribosomal subunit (mt-LSU). Mature N.crassa 74S mitochondrial ribosomes consist of a small (37S) and a large (54S) subunit. The 37S small subunit contains a 16S ribosomal RNA (16S mt-rRNA) and 32 different proteins. The 54S large subunit contains a 23S rRNA (23S mt-rRNA) and 42 different proteins. uL23m forms the wall of the exit tunnel.

The protein localises to the mitochondrion. Functionally, component of the mitochondrial ribosome (mitoribosome), a dedicated translation machinery responsible for the synthesis of mitochondrial genome-encoded proteins, including at least some of the essential transmembrane subunits of the mitochondrial respiratory chain. The mitoribosomes are attached to the mitochondrial inner membrane and translation products are cotranslationally integrated into the membrane. This is Large ribosomal subunit protein uL23m (mrp20) from Neurospora crassa (strain ATCC 24698 / 74-OR23-1A / CBS 708.71 / DSM 1257 / FGSC 987).